A 524-amino-acid polypeptide reads, in one-letter code: GMP synthase [glutamine-hydrolyzing] (524 aa).

The region spanning 9-207 is the Glutamine amidotransferase type-1 domain; it reads RILILDFSSQ…VIHICQCIPN (199 aa). The active-site Nucleophile is the Cys86. Active-site residues include His181 and Glu183. The region spanning 208 to 399 is the GMPS ATP-PPase domain; that stretch reads WTTKHIIEDS…LGLPADLIYR (192 aa). 235–241 contacts ATP; the sequence is SGGVDSA.

As to quaternary structure, homodimer.

The enzyme catalyses XMP + L-glutamine + ATP + H2O = GMP + L-glutamate + AMP + diphosphate + 2 H(+). Its pathway is purine metabolism; GMP biosynthesis; GMP from XMP (L-Gln route): step 1/1. Catalyzes the synthesis of GMP from XMP. The sequence is that of GMP synthase [glutamine-hydrolyzing] from Coxiella burnetii (strain Dugway 5J108-111).